The primary structure comprises 261 residues: MSKQPHILVSNDDGYLAPGLLALVNAVRPLGRITVIAPEQNHSGASNSLTLSRPLSIHRVAGGERDGFFFVNGTPTDCVHVAMTGFLDEKPDLVISGINQGENMGEDTLYSGTVAAAVEGVMFGVPGIAFSQIDRGWNRIEDAAKAAHDVVAQMLVSALARTEGTATLLNVNIPNRPYADLYRWRVTRLGNRHHSQPVVVQDSPRGEKIYWIGAAGEVKEGSEGTDFHAIAEGCISITPMQLDLTHHARLAAMRANGWDRG.

Residues D12, D13, S43, and N99 each contribute to the a divalent metal cation site.

The protein belongs to the SurE nucleotidase family. A divalent metal cation is required as a cofactor.

It is found in the cytoplasm. It carries out the reaction a ribonucleoside 5'-phosphate + H2O = a ribonucleoside + phosphate. Nucleotidase that shows phosphatase activity on nucleoside 5'-monophosphates. The sequence is that of 5'-nucleotidase SurE from Polynucleobacter asymbioticus (strain DSM 18221 / CIP 109841 / QLW-P1DMWA-1) (Polynucleobacter necessarius subsp. asymbioticus).